Here is a 557-residue protein sequence, read N- to C-terminus: Urocanate hydratase (557 aa).

Residues 52–53 (GG), Q130, 176–178 (GMG), E196, R201, 242–243 (NA), 263–267 (QTSAH), 273–274 (YL), and Y322 each bind NAD(+). C410 is an active-site residue. G492 contacts NAD(+).

This sequence belongs to the urocanase family. The cofactor is NAD(+).

The protein localises to the cytoplasm. The enzyme catalyses 4-imidazolone-5-propanoate = trans-urocanate + H2O. The protein operates within amino-acid degradation; L-histidine degradation into L-glutamate; N-formimidoyl-L-glutamate from L-histidine: step 2/3. In terms of biological role, catalyzes the conversion of urocanate to 4-imidazolone-5-propionate. The protein is Urocanate hydratase of Pseudoalteromonas translucida (strain TAC 125).